Here is a 318-residue protein sequence, read N- to C-terminus: tRNA uridine(34) hydroxylase (318 aa).

In terms of domain architecture, Rhodanese spans 123–217 (EDDDTVIIDA…YGKDPETKGE (95 aa)). Catalysis depends on C177, which acts as the Cysteine persulfide intermediate.

Belongs to the TrhO family.

It catalyses the reaction uridine(34) in tRNA + AH2 + O2 = 5-hydroxyuridine(34) in tRNA + A + H2O. Its function is as follows. Catalyzes oxygen-dependent 5-hydroxyuridine (ho5U) modification at position 34 in tRNAs. The protein is tRNA uridine(34) hydroxylase of Staphylococcus aureus (strain USA300).